Reading from the N-terminus, the 442-residue chain is ATP-dependent protease ATPase subunit HslU (442 aa).

Residues isoleucine 18, 60–65, aspartate 255, glutamate 320, and arginine 392 contribute to the ATP site; that span reads GVGKTE.

The protein belongs to the ClpX chaperone family. HslU subfamily. As to quaternary structure, a double ring-shaped homohexamer of HslV is capped on each side by a ring-shaped HslU homohexamer. The assembly of the HslU/HslV complex is dependent on binding of ATP.

Its subcellular location is the cytoplasm. Functionally, ATPase subunit of a proteasome-like degradation complex; this subunit has chaperone activity. The binding of ATP and its subsequent hydrolysis by HslU are essential for unfolding of protein substrates subsequently hydrolyzed by HslV. HslU recognizes the N-terminal part of its protein substrates and unfolds these before they are guided to HslV for hydrolysis. This chain is ATP-dependent protease ATPase subunit HslU, found in Aeromonas salmonicida (strain A449).